A 253-amino-acid chain; its full sequence is MLIEQFICREDNFGVLIHDETSGYTAAIDAPESNAIQNALKRRNWTLQTIFLTHHHHDHVEALAELKQIYKAIVIGPEAEKEKISHIDQTLKPDESFLFGTHTILALSTPGHTLGALSYYFPQENLLFAGDTLFSLGCGRLFEGTPAQMLNSLKKLRQLPDETLLYCGHEYTKSNALFALTLDPYNQKLQQRAEDVFLLRAKNAMTLPVTLGQEKKNNPFLRWDNRTLRKTLRMEKETDEEVFAEIRKRKDNF.

H54, H56, D58, H59, H112, D131, and H169 together coordinate Zn(2+).

The protein belongs to the metallo-beta-lactamase superfamily. Glyoxalase II family. Monomer. The cofactor is Zn(2+).

The catalysed reaction is an S-(2-hydroxyacyl)glutathione + H2O = a 2-hydroxy carboxylate + glutathione + H(+). It functions in the pathway secondary metabolite metabolism; methylglyoxal degradation; (R)-lactate from methylglyoxal: step 2/2. Its function is as follows. Thiolesterase that catalyzes the hydrolysis of S-D-lactoyl-glutathione to form glutathione and D-lactic acid. This chain is Hydroxyacylglutathione hydrolase, found in Bartonella henselae (strain ATCC 49882 / DSM 28221 / CCUG 30454 / Houston 1) (Rochalimaea henselae).